The following is a 514-amino-acid chain: Membrane-bound lytic murein transglycosylase F (514 aa).

The N-terminal stretch at 1–30 (MKKLKINYLFIGILTLLLAAALWPSIPWFG) is a signal peptide. Residues 31–269 (KTENHIAAIQ…RIEEKYLGHG (239 aa)) form a non-LT domain region. The segment at 270-514 (DDFDYVDTRS…LFTPQKKEEK (245 aa)) is LT domain. The active site involves Glu314.

The protein in the N-terminal section; belongs to the bacterial solute-binding protein 3 family. It in the C-terminal section; belongs to the transglycosylase Slt family.

The protein resides in the cell outer membrane. It carries out the reaction Exolytic cleavage of the (1-&gt;4)-beta-glycosidic linkage between N-acetylmuramic acid (MurNAc) and N-acetylglucosamine (GlcNAc) residues in peptidoglycan, from either the reducing or the non-reducing ends of the peptidoglycan chains, with concomitant formation of a 1,6-anhydrobond in the MurNAc residue.. Murein-degrading enzyme that degrades murein glycan strands and insoluble, high-molecular weight murein sacculi, with the concomitant formation of a 1,6-anhydromuramoyl product. Lytic transglycosylases (LTs) play an integral role in the metabolism of the peptidoglycan (PG) sacculus. Their lytic action creates space within the PG sacculus to allow for its expansion as well as for the insertion of various structures such as secretion systems and flagella. The protein is Membrane-bound lytic murein transglycosylase F of Salmonella paratyphi B (strain ATCC BAA-1250 / SPB7).